A 419-amino-acid polypeptide reads, in one-letter code: UDP-N-acetylglucosamine 1-carboxyvinyltransferase (419 aa).

Lys22–Asn23 is a binding site for phosphoenolpyruvate. Residue Arg91 participates in UDP-N-acetyl-alpha-D-glucosamine binding. Cys115 acts as the Proton donor in catalysis. 2-(S-cysteinyl)pyruvic acid O-phosphothioketal is present on Cys115. UDP-N-acetyl-alpha-D-glucosamine is bound by residues Arg120–Leu124, Lys160–Val163, Asp305, and Ile327.

This sequence belongs to the EPSP synthase family. MurA subfamily.

It is found in the cytoplasm. The enzyme catalyses phosphoenolpyruvate + UDP-N-acetyl-alpha-D-glucosamine = UDP-N-acetyl-3-O-(1-carboxyvinyl)-alpha-D-glucosamine + phosphate. It functions in the pathway cell wall biogenesis; peptidoglycan biosynthesis. In terms of biological role, cell wall formation. Adds enolpyruvyl to UDP-N-acetylglucosamine. The chain is UDP-N-acetylglucosamine 1-carboxyvinyltransferase from Klebsiella pneumoniae (strain 342).